The following is a 971-amino-acid chain: Reversion-inducing cysteine-rich protein with Kazal motifs (971 aa).

The signal sequence occupies residues 1-22; sequence MATVRASLRGALLLLLAVAGVA. The stretch at 37-84 is one Knot 1 repeat; the sequence is CCNHSKDNQMCRDVCEQIFSSKSESRLKHLLQRAPDYCPETMVEIWNC. The tract at residues 37-338 is 5 X Knot repeats; that stretch reads CCNHSKDNQM…NPVEVSMLTC (302 aa). Residues asparagine 39 and asparagine 86 are each glycosylated (N-linked (GlcNAc...) asparagine). 2 Knot repeats span residues 104-141 and 151-197; these read CCEL…LFSC and CCSY…LIHC. Asparagine 200 is a glycosylation site (N-linked (GlcNAc...) asparagine). 2 Knot repeats span residues 216–263 and 292–338; these read CCDR…LWQC and CCSK…MLTC. Residues asparagine 297 and asparagine 352 are each glycosylated (N-linked (GlcNAc...) asparagine). Kazal-like domains are found at residues 627 to 673, 698 to 752, and 753 to 789; these read TFTG…SCMS, TFDK…PCQP, and FCRA…DCQA. Disulfide bonds link cysteine 633–cysteine 658, cysteine 635–cysteine 654, cysteine 643–cysteine 671, cysteine 716–cysteine 735, cysteine 724–cysteine 750, and cysteine 761–cysteine 787. The GPI-anchor amidated serine moiety is linked to residue serine 942. Positions 943 to 971 are cleaved as a propeptide — removed in mature form; the sequence is AGVRARPSCHSLLLPLSLGLALHLLWTYN.

Belongs to the RECK family. Interacts (via knot repeats) with WNT7A (via disordered linker region); the interaction is direct. Interacts (via knot repeats) with WNT7B (via disordered linker region); the interaction is direct. Interacts with ADGRA2; the interaction is direct. Interacts with MMP9. N-glycosylated. As to expression, expressed in various tissues and untransformed cells. It is undetectable in tumor-derived cell lines and oncogenically transformed cells.

It is found in the cell membrane. Functions together with ADGRA2 to enable brain endothelial cells to selectively respond to Wnt7 signals (WNT7A or WNT7B). Plays a key role in Wnt7-specific responses: required for central nervous system (CNS) angiogenesis and blood-brain barrier regulation. Acts as a Wnt7-specific coactivator of canonical Wnt signaling by decoding Wnt ligands: acts by interacting specifically with the disordered linker region of Wnt7, thereby conferring ligand selectivity for Wnt7. ADGRA2 is then required to deliver RECK-bound Wnt7 to frizzled by assembling a higher-order RECK-ADGRA2-Fzd-LRP5-LRP6 complex. Also acts as a serine protease inhibitor: negatively regulates matrix metalloproteinase-9 (MMP9) by suppressing MMP9 secretion and by direct inhibition of its enzymatic activity. Also inhibits metalloproteinase activity of MMP2 and MMP14 (MT1-MMP). The polypeptide is Reversion-inducing cysteine-rich protein with Kazal motifs (Homo sapiens (Human)).